A 401-amino-acid chain; its full sequence is Argininosuccinate synthase (401 aa).

9–17 (AYSGGLDTS) lines the ATP pocket. Residue tyrosine 86 coordinates L-citrulline. Glycine 116 is an ATP binding site. L-aspartate is bound by residues threonine 118, asparagine 122, and aspartate 123. An L-citrulline-binding site is contributed by asparagine 122. L-citrulline contacts are provided by arginine 126, serine 174, serine 183, glutamate 259, and tyrosine 271.

This sequence belongs to the argininosuccinate synthase family. Type 1 subfamily. As to quaternary structure, homotetramer.

The protein resides in the cytoplasm. The catalysed reaction is L-citrulline + L-aspartate + ATP = 2-(N(omega)-L-arginino)succinate + AMP + diphosphate + H(+). It participates in amino-acid biosynthesis; L-arginine biosynthesis; L-arginine from L-ornithine and carbamoyl phosphate: step 2/3. The chain is Argininosuccinate synthase from Bacillus cereus (strain B4264).